A 431-amino-acid polypeptide reads, in one-letter code: Enolase (431 aa).

Residue Gln164 participates in (2R)-2-phosphoglycerate binding. The Proton donor role is filled by Glu206. 3 residues coordinate Mg(2+): Asp243, Glu286, and Asp313. The (2R)-2-phosphoglycerate site is built by Lys338, Arg367, Ser368, and Lys389. Catalysis depends on Lys338, which acts as the Proton acceptor.

The protein belongs to the enolase family. Mg(2+) is required as a cofactor.

It is found in the cytoplasm. The protein localises to the secreted. Its subcellular location is the cell surface. It catalyses the reaction (2R)-2-phosphoglycerate = phosphoenolpyruvate + H2O. It participates in carbohydrate degradation; glycolysis; pyruvate from D-glyceraldehyde 3-phosphate: step 4/5. Functionally, catalyzes the reversible conversion of 2-phosphoglycerate (2-PG) into phosphoenolpyruvate (PEP). It is essential for the degradation of carbohydrates via glycolysis. The chain is Enolase from Chloroflexus aggregans (strain MD-66 / DSM 9485).